The following is a 213-amino-acid chain: Redox-sensing transcriptional repressor Rex (213 aa).

A DNA-binding region (H-T-H motif) is located at residues 17 to 56 (LYYRIFKRFHSENIEKASSKQIAEAIGIDSATVRRDFSYF). 91–96 (GVGNIG) contacts NAD(+).

This sequence belongs to the transcriptional regulatory Rex family. As to quaternary structure, homodimer.

Its subcellular location is the cytoplasm. Modulates transcription in response to changes in cellular NADH/NAD(+) redox state. This is Redox-sensing transcriptional repressor Rex from Streptococcus mutans serotype c (strain ATCC 700610 / UA159).